A 463-amino-acid polypeptide reads, in one-letter code: MSDTKSNAMWGGRFAAGPDAIMEAINASIGFDRRLARQDIDGSRAHAAMLAQQGILSSKDAEAIREGLLTVLSEIETGQFAFSAALEDIHMNVEARLKELIGEPAGRLHTGRSRNDQVATDFKLWVRDQLDAADAGLLALLRALLAQAEAGADWVMPGFTHLQTAQPVTWGHHMMAYVEMFARDRGRMQDARARMNECPLGAAALAGTSFPLDRDATAQALGFDRPAANSLDAVSDRDFALEFLAAASICAMHLSRMAEELVIWSSAQFRFVTLSDRFSTGSSIMPQKKNPDAAELIRAKIGRIVGANVALLTVMKGLPLAYSKDMQEDKEQVFDAADTLMLALAAMEGMVRDMTANRASLEDAAASGFSTATDLADWLVRELNLPFRDAHHVTGTLVAMAEAKGCDLPDLSLAEMQSVHGAIRADVFEVLGVHNSVASRTSYGGTAPSQVRAQVARWKERLG.

It belongs to the lyase 1 family. Argininosuccinate lyase subfamily.

The protein localises to the cytoplasm. The catalysed reaction is 2-(N(omega)-L-arginino)succinate = fumarate + L-arginine. It participates in amino-acid biosynthesis; L-arginine biosynthesis; L-arginine from L-ornithine and carbamoyl phosphate: step 3/3. The chain is Argininosuccinate lyase from Dinoroseobacter shibae (strain DSM 16493 / NCIMB 14021 / DFL 12).